The sequence spans 807 residues: Hyaluronate lyase (807 aa).

The N-terminal stretch at 1 to 40 (MTYRIKKWQKLSTITLLMAGVITLNGGEFRSVDKHQIAVA) is a signal peptide. Active-site residues include Asn241, His297, and Tyr306.

It belongs to the polysaccharide lyase 8 family.

It is found in the secreted. It catalyses the reaction [hyaluronan](n) = n 3-(4-deoxy-beta-D-gluc-4-enuronosyl)-N-acetyl-D-glucosamine + H2O. This is Hyaluronate lyase from Staphylococcus aureus (strain NCTC 8325 / PS 47).